We begin with the raw amino-acid sequence, 586 residues long: A-type ATP synthase subunit A (586 aa).

233–240 (GPFGSGKT) is an ATP binding site.

It belongs to the ATPase alpha/beta chains family. As to quaternary structure, has multiple subunits with at least A(3), B(3), C, D, E, F, H, I and proteolipid K(x).

The protein resides in the cell membrane. It catalyses the reaction ATP + H2O + 4 H(+)(in) = ADP + phosphate + 5 H(+)(out). Component of the A-type ATP synthase that produces ATP from ADP in the presence of a proton gradient across the membrane. The A chain is the catalytic subunit. The sequence is that of A-type ATP synthase subunit A from Methanococcus aeolicus (strain ATCC BAA-1280 / DSM 17508 / OCM 812 / Nankai-3).